The sequence spans 160 residues: Nucleotide-binding protein TERTU_3542 (160 aa).

It belongs to the YajQ family.

Its function is as follows. Nucleotide-binding protein. The chain is Nucleotide-binding protein TERTU_3542 from Teredinibacter turnerae (strain ATCC 39867 / T7901).